The sequence spans 499 residues: Neuronal acetylcholine receptor subunit alpha-7 (499 aa).

Residues 1-19 (MRGSLCLALAASILHVSLQ) form the signal peptide. The Extracellular portion of the chain corresponds to 20–230 (GEFQRKLYKD…VSIRRRTLYY (211 aa)). Ca(2+)-binding residues include Arg-39 and Val-41. N-linked (GlcNAc...) asparagine glycans are attached at residues Asn-43, Asn-87, and Asn-130. A disulfide bridge connects residues Cys-147 and Cys-161. Ca(2+)-binding residues include Ser-169 and Tyr-207. A disulfide bridge connects residues Cys-209 and Cys-210. Helical transmembrane passes span 231–251 (GLNL…VFLL), 259–279 (ISLG…VAEI), and 292–312 (QYFA…VIVL). An essential for TMEM35A/NACHO-mediated proper subunit assembly and trafficking to cell membrane region spans residues 257–264 (EKISLGIT). Residues 313 to 466 (QYHHHDPDGG…WKFAACVVDR (154 aa)) lie on the Cytoplasmic side of the membrane. Residues 467–487 (LCLMAFSVFTILCTIGILMSA) form a helical membrane-spanning segment.

It belongs to the ligand-gated ion channel (TC 1.A.9) family. Acetylcholine receptor (TC 1.A.9.1) subfamily. Alpha-7/CHRNA7 sub-subfamily. In terms of assembly, homopentamer. Homooligomer of the short form gives rise to unfunctional channels, as does coexpression of both long and short forms of the receptor. Can also form heteropentamers with CHRNB2, mainly found in basal forebrain cholinergic neurons. Interacts with RIC3; which is required for proper folding and assembly. Interacts with LYPD6. Interacts with CANX. Glycosylations at Asn-43, Asn-87 and Asn-130 are essential for TMEM35A/NACHO-mediated proper subunit assembly and trafficking to the cell membrane. In terms of tissue distribution, at least in chromaffin cells.

The protein localises to the postsynaptic cell membrane. The protein resides in the cell membrane. The catalysed reaction is Ca(2+)(in) = Ca(2+)(out). It catalyses the reaction K(+)(in) = K(+)(out). The enzyme catalyses Na(+)(in) = Na(+)(out). It carries out the reaction choline(out) = choline(in). The catalysed reaction is NH4(+)(in) = NH4(+)(out). It catalyses the reaction L-arginine(in) = L-arginine(out). The enzyme catalyses guanidine(out) = guanidine(in). Activated by a myriad of ligands such as acetylcholine, cytisine, nicotine, choline and epibatidine. Oligomeric amyloid-beta protein 42 activates specifially CHRNA7:CHRNB2 nAchRs. Activity is modulated by positive allosteric modulators (PAMs), such as flavonoids, with a wide range of chemical diversity, pharmacological sensitivity and efficacy. AChR activity is inhibited by the antagonists alpha-conotoxons RgIA, ImI and ImII, small disulfide-constrained peptides from cone snails. Alpha-conotoxin PnIC selectively inhibits CHRNA7:CHRNB2 over CHRNA7 homopentamer. Its function is as follows. Component of neuronal acetylcholine receptors (nAChRs) that function as pentameric, ligand-gated cation channels with high calcium permeability among other activities. nAChRs are excitatory neurotrasnmitter receptors formed by a collection of nAChR subunits known to mediate synaptic transmission in the nervous system and the neuromuscular junction. Each nAchR subunit confers differential attributes to channel properties, including activation, deactivation and desensitization kinetics, pH sensitivity, cation permeability, and binding to allosteric modulators. CHRNA7 forms homopentameric neuronal acetylcholine receptors abundantly expressed in the central nervous system, characterized by fast desensitization and high calcium permeability. Also forms heteropentamers with CHRNB2, mainly expressed in basal forebrain cholinergic neurons. Involved in the modulation of calcium-dependent signaling pathways and influences the release of neurotransmitters, including dopamine, glutamate and GABA. Also expressed in non-neuronal cells such as immune cells like lymphocytes, monocytes and macrophages. In T cells, activation induces metabotropic signaling that results in an increase of intracellular Ca2+ concentrations, independent of ionotropic receptor functions. In macrophages, required for acetylcholine-mediated inhibition of TNF and other inflammatory cytokine release. Once activated by acetylcholine, nicotine or other agonists, selectively inhibits production of pro-inflammatory cytokines while leaving anti-inflammatory cytokines undisturbed. Stimulates the cholinergic anti-inflammatory pathway, controlling inflammation by inhibiting NFKB nuclear translocation and activating the JAK2-STAT3 pathway, independently of ion channel activity. Also expressed in the urothelium where it modulates reflex bladder activity by increasing intracellular calcium through internal stores and decreasing basal ATP release. The polypeptide is Neuronal acetylcholine receptor subunit alpha-7 (CHRNA7) (Bos taurus (Bovine)).